We begin with the raw amino-acid sequence, 261 residues long: Probable membrane transporter protein ORF9 (261 aa).

Transmembrane regions (helical) follow at residues 8-28 (LLAFLFVAAFIAGFIDSIAGG), 29-49 (GGMITIPAMLIAGIPPLQTLG), 78-98 (LPMALMSAAGAVLGALLATIV), 100-120 (GDVLKAILPFLLIAIALYFGL), 133-151 (VTPFVFTLTLVPLIGFYDG), 152-171 (VFGPGTGSFFMLGFVTLAGF), 189-209 (VGAFGVFLFFGAVLWKVGLLM), and 231-251 (IIKPLLVIVSIALAIRLLADP).

Belongs to the 4-toluene sulfonate uptake permease (TSUP) (TC 2.A.102) family.

It localises to the cell membrane. This chain is Probable membrane transporter protein ORF9, found in Sinorhizobium sp.